The sequence spans 191 residues: dTTP/UTP pyrophosphatase (191 aa).

The Proton acceptor role is filled by Asp75.

It belongs to the Maf family. YhdE subfamily. A divalent metal cation is required as a cofactor.

Its subcellular location is the cytoplasm. The catalysed reaction is dTTP + H2O = dTMP + diphosphate + H(+). The enzyme catalyses UTP + H2O = UMP + diphosphate + H(+). Its function is as follows. Nucleoside triphosphate pyrophosphatase that hydrolyzes dTTP and UTP. May have a dual role in cell division arrest and in preventing the incorporation of modified nucleotides into cellular nucleic acids. This chain is dTTP/UTP pyrophosphatase, found in Aliivibrio fischeri (strain ATCC 700601 / ES114) (Vibrio fischeri).